The chain runs to 1367 residues: Flocculation protein FLO11 (1367 aa).

An N-terminal signal peptide occupies residues 1-21; sequence MQRPFLLAYLVLSLLFNSALG. Residues 31–207 form the Flo11 domain; the sequence is SSEGTSCNSI…NIDCDNNCGG (177 aa). Cystine bridges form between Cys37–Cys201, Cys44–Cys179, and Cys141–Cys205. The span at 209–267 shows a compositional bias: low complexity; it reads KSSTTTSSTSESSTTTSSTSESSTTTSSTSESSTTTSSTSESSTSSSTTAPATPTTTSC. Disordered regions lie at residues 209-975 and 1008-1032; these read KSST…TTSV and TTTV…PTTP. 45 tandem repeats follow at residues 210–219, 220–229, 230–239, 240–249, 262–274, 275–287, 313–327, 328–342, 343–354, 355–369, 370–381, 382–393, 394–408, 409–420, 421–432, 433–444, 445–456, 457–471, 472–483, 484–498, 499–510, 511–525, 526–540, 541–552, 568–579, 580–594, 595–609, 610–624, 625–636, 637–651, 652–666, 667–681, 682–693, 694–705, 706–720, 721–735, 736–750, 751–762, 763–777, 778–792, 808–822, 838–852, 865–879, 937–968, and 981–1012. Residues 210-249 form a 4 X 10 AA repeats, Ser/Thr-rich region; sequence SSTTTSSTSESSTTTSSTSESSTTTSSTSESSTTTSSTSE. The segment at 262-287 is 2 X 13 AA repeats, Thr-rich; sequence PTTTSCTKEKPTPPTTTSCTKEKPTP. Residues 281–292 show a composition bias toward basic and acidic residues; it reads TKEKPTPPHHDT. Composition is skewed to low complexity over residues 302-900 and 910-948; these read TSKT…TVTP and TETS…STGT. A 22 X 15 AA approximate repeats, Ser-rich region spans residues 313-852; the sequence is PVPTPSSSTT…SSSTTESSSA (540 aa). Residues 343 to 762 are 15 X 12 AA repeats, Ser/Thr-rich; that stretch reads PVTSSTTESS…TSSTTESSSA (420 aa). N-linked (GlcNAc...) asparagine glycosylation is present at Asn817. Asn874 carries an N-linked (GlcNAc...) asparagine glycan. The segment at 937–1119 is 3 X 32 AA tandem repeats, Thr-rich; it reads TTITTTVCST…SPKTVTTTVP (183 aa). Polar residues predominate over residues 949 to 961; it reads NSAGETTSGCSPK. Positions 962-975 are enriched in low complexity; that stretch reads TVTTTVPTTTTTSV. Low complexity predominate over residues 1014 to 1032; it reads STSPSETASESTTTSPTTP. One copy of the 5-3 repeat lies at 1088–1119; the sequence is TTITTTVCSTGTNSAGETTSGCSPKTVTTTVP. Gly1346 is lipidated: GPI-anchor amidated glycine. Positions 1347-1367 are cleaved as a propeptide — removed in mature form; the sequence is AANIKVLGNFMWLLLALPVVF.

Belongs to the flocculin family. Highly divergent. Extensively O-mannosylated. In terms of processing, the GPI-anchor is attached to the protein in the endoplasmic reticulum and serves to target the protein to the cell surface. There, the glucosamine-inositol phospholipid moiety is cleaved off and the GPI-modified mannoprotein is covalently attached via its lipidless GPI glycan remnant to the 1,6-beta-glucan of the outer cell wall layer. Post-translationally, a soluble form is probably produced by proteolytic cleavage at the cell surface (shedding).

The protein localises to the secreted. The protein resides in the cell wall. It localises to the membrane. Homophilic binding protein that enables kin discrimination in heterogeneous yeast populations by mediating homotypic cell-cell interactions during flocculation, a reversible and asexual process in which cells adhere to form aggregates (flocs). Plays a role in cell-substrate adhesion, haploid invasive growth, diploid pseudohyphae formation and biofilm (flor) development. Adhesive activity is inhibited by mannose, but not by glucose, maltose, sucrose or galactose. In Saccharomyces cerevisiae (strain ATCC 204508 / S288c) (Baker's yeast), this protein is Flocculation protein FLO11.